Here is a 268-residue protein sequence, read N- to C-terminus: 3-methyl-2-oxobutanoate hydroxymethyltransferase (268 aa).

D46 and D85 together coordinate Mg(2+). 3-methyl-2-oxobutanoate contacts are provided by residues 46–47, D85, and K115; that span reads DS. E117 serves as a coordination point for Mg(2+). Residue E184 is the Proton acceptor of the active site.

The protein belongs to the PanB family. Homodecamer; pentamer of dimers. The cofactor is Mg(2+).

Its subcellular location is the cytoplasm. The enzyme catalyses 3-methyl-2-oxobutanoate + (6R)-5,10-methylene-5,6,7,8-tetrahydrofolate + H2O = 2-dehydropantoate + (6S)-5,6,7,8-tetrahydrofolate. It participates in cofactor biosynthesis; (R)-pantothenate biosynthesis; (R)-pantoate from 3-methyl-2-oxobutanoate: step 1/2. In terms of biological role, catalyzes the reversible reaction in which hydroxymethyl group from 5,10-methylenetetrahydrofolate is transferred onto alpha-ketoisovalerate to form ketopantoate. The polypeptide is 3-methyl-2-oxobutanoate hydroxymethyltransferase (Magnetococcus marinus (strain ATCC BAA-1437 / JCM 17883 / MC-1)).